Consider the following 359-residue polypeptide: sn-1 acyl-lipid omega-3 desaturase (ferredoxin) (359 aa).

Helical transmembrane passes span 44 to 64 (LGYF…AAYL) and 67 to 87 (WFFY…LFVV). Positions 89–93 (HDCGH) match the Histidine box-1 motif. The Histidine box-2 signature appears at 125 to 129 (HRTHH). Helical transmembrane passes span 153 to 173 (AWYE…IYLF), 206 to 226 (LAAF…LFLL), and 228 to 248 (FYVA…FLHH). Residues 291 to 295 (HHIFS) carry the Histidine box-3 motif.

It belongs to the fatty acid desaturase type 2 family. Fe(2+) is required as a cofactor.

The protein localises to the membrane. The catalysed reaction is a 1-[(9Z,12Z)-octadecdienoyl]-2-acyl-glycerolipid + 2 reduced [2Fe-2S]-[ferredoxin] + O2 + 2 H(+) = a 1-[(9Z,12Z,15Z)-octadectrienoyl]-2-acyl-glycerolipid + 2 oxidized [2Fe-2S]-[ferredoxin] + 2 H2O. It carries out the reaction a 1-[(6Z,9Z,12Z)-octadectrienoyl]-2-acyl-glycerolipid + 2 reduced [2Fe-2S]-[ferredoxin] + O2 + 2 H(+) = a 1-[(6Z,9Z,12Z,15Z)-octadectetraenoyl]-2-acyl-glycerolipid + 2 oxidized [2Fe-2S]-[ferredoxin] + 2 H2O. Its pathway is lipid metabolism; polyunsaturated fatty acid biosynthesis. Functionally, desaturase involved in fatty acid biosynthesis. Introduces a double bond at carbon 15 of linoleoyl and gamma-linolenoyl groups attached to the sn-1 position of the glycerol moiety of membrane glycerolipids. The protein is sn-1 acyl-lipid omega-3 desaturase (ferredoxin) of Synechocystis sp. (strain ATCC 27184 / PCC 6803 / Kazusa).